Here is a 93-residue protein sequence, read N- to C-terminus: Small ribosomal subunit protein uS19 (93 aa).

Belongs to the universal ribosomal protein uS19 family.

In terms of biological role, protein S19 forms a complex with S13 that binds strongly to the 16S ribosomal RNA. This chain is Small ribosomal subunit protein uS19, found in Synechococcus sp. (strain JA-2-3B'a(2-13)) (Cyanobacteria bacterium Yellowstone B-Prime).